The primary structure comprises 113 residues: UPF0342 protein spyM18_0873 (113 aa).

The protein belongs to the UPF0342 family.

This Streptococcus pyogenes serotype M18 (strain MGAS8232) protein is UPF0342 protein spyM18_0873.